The following is a 118-amino-acid chain: Large ribosomal subunit protein uL18 (118 aa).

The tract at residues 1-22 (MISKPDKNKLRQKRHRRVRGKL) is disordered. Residues 10–20 (LRQKRHRRVRG) are compositionally biased toward basic residues.

This sequence belongs to the universal ribosomal protein uL18 family. As to quaternary structure, part of the 50S ribosomal subunit; part of the 5S rRNA/L5/L18/L25 subcomplex. Contacts the 5S and 23S rRNAs.

In terms of biological role, this is one of the proteins that bind and probably mediate the attachment of the 5S RNA into the large ribosomal subunit, where it forms part of the central protuberance. The polypeptide is Large ribosomal subunit protein uL18 (Streptococcus thermophilus (strain ATCC BAA-491 / LMD-9)).